We begin with the raw amino-acid sequence, 154 residues long: Protein X (154 aa).

The segment at 68-117 is mitochondrial targeting sequence; the sequence is PCALRFTSARCMETTVNAHQILPKVLHKRTLGLPAMSTTDLEAYFKDCVF.

The protein belongs to the orthohepadnavirus protein X family. In terms of assembly, may form homodimer. May interact with host CEBPA, CFLAR, CREB1, DDB1, E4F1, HBXIP, HSPD1/HSP60, NFKBIA, POLR2E and SMAD4. Interacts with host SMC5-SMC6 complex and induces its degradation. Interacts with host TRPC4AP; leading to prevent ubiquitination of TRPC4AP. Interacts with host PLSCR1; this interaction promotes ubiquitination and degradation of HBx and impairs HBx-mediated cell proliferation. A fraction may be phosphorylated in insect cells and HepG2 cells, a human hepatoblastoma cell line. Phosphorylated in vitro by host protein kinase C or mitogen-activated protein kinase. N-acetylated in insect cells.

It localises to the host cytoplasm. The protein localises to the host nucleus. The protein resides in the host mitochondrion. In terms of biological role, multifunctional protein that plays a role in silencing host antiviral defenses and promoting viral transcription. Does not seem to be essential for HBV infection. May be directly involved in development of cirrhosis and liver cancer (hepatocellular carcinoma). Most of cytosolic activities involve modulation of cytosolic calcium. The effect on apoptosis is controversial depending on the cell types in which the studies have been conducted. May induce apoptosis by localizing in mitochondria and causing loss of mitochondrial membrane potential. May also modulate apoptosis by binding host CFLAR, a key regulator of the death-inducing signaling complex (DISC). Promotes viral transcription by using the host E3 ubiquitin ligase DDB1 to target the SMC5-SMC6 complex to proteasomal degradation. This host complex would otherwise bind to viral episomal DNA, and prevents its transcription. Moderately stimulates transcription of many different viral and cellular transcription elements. Promoters and enhancers stimulated by HBx contain DNA binding sites for NF-kappa-B, AP-1, AP-2, c-EBP, ATF/CREB, or the calcium-activated factor NF-AT. The sequence is that of Protein X from Hepatitis B virus genotype A2 subtype adw2 (strain Rutter 1979) (HBV-A).